We begin with the raw amino-acid sequence, 481 residues long: tRNA-2-methylthio-N(6)-dimethylallyladenosine synthase (481 aa).

One can recognise an MTTase N-terminal domain in the interval 24-140 (KKLFIESYGC…LPNLLNEVEE (117 aa)). Cysteine 33, cysteine 69, cysteine 103, cysteine 178, cysteine 182, and cysteine 185 together coordinate [4Fe-4S] cluster. A Radical SAM core domain is found at 164–411 (MSNGITALVA…DLQQKHAWWR (248 aa)). The region spanning 413–476 (EDFIGQTVEV…SGTLKGEAVG (64 aa)) is the TRAM domain.

This sequence belongs to the methylthiotransferase family. MiaB subfamily. Monomer. The cofactor is [4Fe-4S] cluster.

It is found in the cytoplasm. The catalysed reaction is N(6)-dimethylallyladenosine(37) in tRNA + (sulfur carrier)-SH + AH2 + 2 S-adenosyl-L-methionine = 2-methylsulfanyl-N(6)-dimethylallyladenosine(37) in tRNA + (sulfur carrier)-H + 5'-deoxyadenosine + L-methionine + A + S-adenosyl-L-homocysteine + 2 H(+). Its function is as follows. Catalyzes the methylthiolation of N6-(dimethylallyl)adenosine (i(6)A), leading to the formation of 2-methylthio-N6-(dimethylallyl)adenosine (ms(2)i(6)A) at position 37 in tRNAs that read codons beginning with uridine. This Flavobacterium psychrophilum (strain ATCC 49511 / DSM 21280 / CIP 103535 / JIP02/86) protein is tRNA-2-methylthio-N(6)-dimethylallyladenosine synthase.